Consider the following 708-residue polypeptide: Assimilatory nitrate reductase (708 aa).

The 4Fe-4S Mo/W bis-MGD-type domain occupies 15–73 (TKQVPTTCMRCAVGCGHVHLGSENAYGLETVRGDPSHPVNNGLACGRGIRESADPAGEW). C22, C25, C29, and C59 together coordinate [4Fe-4S] cluster. Residues 586 to 613 (TTGREADGYNTGVRSRSDTPEEPVARVN) form a disordered region.

This sequence belongs to the prokaryotic molybdopterin-containing oxidoreductase family. NasA/NapA/NarB subfamily. As to quaternary structure, is probably a monomer. Initially characterized as a dimer of proteins with a MW of 105 and 50 kDa. [4Fe-4S] cluster is required as a cofactor. Mo-bis(molybdopterin guanine dinucleotide) serves as cofactor.

Its subcellular location is the cytoplasm. The catalysed reaction is nitrite + 2 oxidized [2Fe-2S]-[ferredoxin] + H2O = nitrate + 2 reduced [2Fe-2S]-[ferredoxin] + 2 H(+). Its pathway is nitrogen metabolism; nitrate reduction (assimilation). Its activity is regulated as follows. Inhibited by cyanide and azide. In terms of biological role, nitrate reductase is a key enzyme involved in the first step of nitrate assimilation. Catalyzes the reduction of nitrate to nitrite, using ferredoxin as the electron donor. Can use reduced methyl viologen but neither NADPH nor NADH as electron donors. The chain is Assimilatory nitrate reductase from Haloferax mediterranei (strain ATCC 33500 / DSM 1411 / JCM 8866 / NBRC 14739 / NCIMB 2177 / R-4) (Halobacterium mediterranei).